We begin with the raw amino-acid sequence, 499 residues long: Tektin-like protein 1 (499 aa).

At Ser-14 the chain carries Phosphoserine. A coiled-coil region spans residues 201-225 (WEKKELKSMKRKMEKDMEISEDLLK). The segment at 265–286 (VDITRPPTPRTQGLKTPPPDPI) is disordered. Positions 308 to 328 (KDILTEMAKNEVDIQNQQQEI) form a coiled coil. Tyr-372 is modified (phosphotyrosine).

As to quaternary structure, microtubule inner protein component of sperm flagellar doublet microtubules.

It localises to the cytoplasm. The protein localises to the cytoskeleton. The protein resides in the flagellum axoneme. Functionally, microtubule inner protein (MIP) part of the dynein-decorated doublet microtubules (DMTs) in sperm flagellar axoneme, which is required for motile flagellum beating. Forms an extensive interaction network cross-linking the lumen of axonemal doublet microtubules. This chain is Tektin-like protein 1, found in Mus musculus (Mouse).